We begin with the raw amino-acid sequence, 476 residues long: Lactate utilization protein B (476 aa).

4Fe-4S ferredoxin-type domains follow at residues Gly-304–Tyr-334 and Tyr-353–Leu-382. Cys-313, Cys-316, Cys-319, Cys-323, Cys-366, Cys-369, and Cys-373 together coordinate [4Fe-4S] cluster.

It belongs to the LutB/YkgF family.

In terms of biological role, is involved in L-lactate degradation and allows cells to grow with lactate as the sole carbon source. Has probably a role as an electron transporter during oxidation of L-lactate. The chain is Lactate utilization protein B from Bacillus velezensis (strain DSM 23117 / BGSC 10A6 / LMG 26770 / FZB42) (Bacillus amyloliquefaciens subsp. plantarum).